The following is a 209-amino-acid chain: D-aminoacyl-tRNA deacylase 1 (209 aa).

Mg(2+)-binding residues include Val-4, Gln-6, and Cys-28. The short motif at 139 to 140 (GP) is the Gly-cisPro motif, important for rejection of L-amino acids element. Residues 142-209 (TIELESPAPG…EGDVSSEREP (68 aa)) are disordered. Composition is skewed to basic and acidic residues over residues 159–170 (QLSKLEKQQQRK) and 181–194 (SSKE…EDRS). Residues Ser-197, Ser-204, and Ser-205 each carry the phosphoserine modification.

Belongs to the DTD family. In terms of assembly, homodimer. Interacts with CDC45 and TOPBP1. In terms of processing, preferentially phosphorylated in cells arrested early in S phase. Phosphorylation in the C-terminus weakens the interaction with CDC45.

It localises to the nucleus. Its subcellular location is the cytoplasm. The enzyme catalyses glycyl-tRNA(Ala) + H2O = tRNA(Ala) + glycine + H(+). The catalysed reaction is a D-aminoacyl-tRNA + H2O = a tRNA + a D-alpha-amino acid + H(+). Functionally, an aminoacyl-tRNA editing enzyme that deacylates mischarged D-aminoacyl-tRNAs. Also deacylates mischarged glycyl-tRNA(Ala), protecting cells against glycine mischarging by AlaRS. Acts via tRNA-based rather than protein-based catalysis; rejects L-amino acids rather than detecting D-amino acids in the active site. By recycling D-aminoacyl-tRNA to D-amino acids and free tRNA molecules, this enzyme counteracts the toxicity associated with the formation of D-aminoacyl-tRNA entities in vivo and helps enforce protein L-homochirality. Its function is as follows. ATPase involved in DNA replication, may facilitate loading of CDC45 onto pre-replication complexes. This chain is D-aminoacyl-tRNA deacylase 1 (DTD1), found in Bos taurus (Bovine).